Consider the following 262-residue polypeptide: MTAELSPIDRAKYVAARRAVEYVEDGMRVGLGTGSTAAWMVRCLGELVRDEGMQITGVATSTRTADLARDVGVTVKTLDDVRWLDLTIDGTDEYDPNLNLIKGGGGALLHEKVVATASDQMVVIADPTKQVDTLGAFPLPVEVIPFGWQTTKALIEEMLSNLDVLGRSASLRLSGAEPFRTDEGNLILDLHLRRIAQPAQLSLVLNQIPGVVENGLFLDICDVLVIGNADGTVEVRDINNGTIEHERVDVAETDNLFVEVKE.

Substrate-binding positions include 33 to 36, 89 to 92, and 102 to 105; these read TGST, DGTD, and KGGG. E111 functions as the Proton acceptor in the catalytic mechanism. K129 serves as a coordination point for substrate.

This sequence belongs to the ribose 5-phosphate isomerase family. As to quaternary structure, homodimer.

The enzyme catalyses aldehydo-D-ribose 5-phosphate = D-ribulose 5-phosphate. The protein operates within carbohydrate degradation; pentose phosphate pathway; D-ribose 5-phosphate from D-ribulose 5-phosphate (non-oxidative stage): step 1/1. Its function is as follows. Catalyzes the reversible conversion of ribose-5-phosphate to ribulose 5-phosphate. In Jannaschia sp. (strain CCS1), this protein is Ribose-5-phosphate isomerase A.